The following is a 281-amino-acid chain: Pantothenate synthetase (281 aa).

An ATP-binding site is contributed by 30-37 (MGALHHGH). The active-site Proton donor is H37. A (R)-pantoate-binding site is contributed by Q61. Q61 lines the beta-alanine pocket. ATP is bound at residue 147-150 (GEKD). Residue Q153 coordinates (R)-pantoate. Residues L176 and 184–187 (SSSR) contribute to the ATP site.

This sequence belongs to the pantothenate synthetase family. As to quaternary structure, homodimer.

Its subcellular location is the cytoplasm. It catalyses the reaction (R)-pantoate + beta-alanine + ATP = (R)-pantothenate + AMP + diphosphate + H(+). It participates in cofactor biosynthesis; (R)-pantothenate biosynthesis; (R)-pantothenate from (R)-pantoate and beta-alanine: step 1/1. Its function is as follows. Catalyzes the condensation of pantoate with beta-alanine in an ATP-dependent reaction via a pantoyl-adenylate intermediate. This is Pantothenate synthetase from Bartonella bacilliformis (strain ATCC 35685 / KC583 / Herrer 020/F12,63).